Consider the following 525-residue polypeptide: Tigger transposable element-derived protein 2 (525 aa).

The region spanning 1–52 is the HTH psq-type domain; it reads MLGKRKRVVLTIKDKLDIIKKLEEGISFKKLSVVYGIGESTVRDIKKNKERI. 2 DNA-binding regions (H-T-H motif) span residues 28 to 48 and 100 to 132; these read FKKL…IKKN and TICA…FKQR. Residues 67–139 enclose the HTH CENPB-type domain; that stretch reads KRKSMKSSTY…KQRHGIPKAA (73 aa). Residues 168 to 385 form the DDE-1 domain; the sequence is LQPEQIYGAD…VKSSTITKAW (218 aa). The interval 442–474 is disordered; the sequence is QVLTDSESAEDQTKAAEQKPSSKSRKTELNPEK.

The protein belongs to the tigger transposable element derived protein family.

The protein localises to the nucleus. The protein is Tigger transposable element-derived protein 2 (TIGD2) of Homo sapiens (Human).